An 839-amino-acid chain; its full sequence is Septin-interacting protein 1 (839 aa).

A disordered region spans residues I22–E164. A phosphoserine mark is found at S43 and S47. The residue at position 53 (T53) is a Phosphothreonine. Residues L88 to A101 show a composition bias toward basic and acidic residues. Over residues E102 to D111 the composition is skewed to acidic residues. Positions S140 to Q149 are enriched in polar residues. The region spanning T167–P213 is the G-patch domain. Positions I363 to N411 form a coiled coil.

Belongs to the TFP11/STIP family. Identified in the spliceosome C complex. Interacts with pnut.

It is found in the nucleus. May be involved in pre-mRNA splicing. The protein is Septin-interacting protein 1 (sip1) of Drosophila melanogaster (Fruit fly).